A 550-amino-acid chain; its full sequence is Methionine--tRNA ligase (550 aa).

The 'HIGH' region signature appears at proline 13 to histidine 23. 4 residues coordinate Zn(2+): cysteine 144, cysteine 147, cysteine 157, and cysteine 160. A 'KMSKS' region motif is present at residues lysine 329–serine 333. Residue lysine 332 participates in ATP binding.

Belongs to the class-I aminoacyl-tRNA synthetase family. MetG type 1 subfamily. Monomer. The cofactor is Zn(2+).

The protein localises to the cytoplasm. The enzyme catalyses tRNA(Met) + L-methionine + ATP = L-methionyl-tRNA(Met) + AMP + diphosphate. Functionally, is required not only for elongation of protein synthesis but also for the initiation of all mRNA translation through initiator tRNA(fMet) aminoacylation. The chain is Methionine--tRNA ligase from Ruthia magnifica subsp. Calyptogena magnifica.